Reading from the N-terminus, the 1378-residue chain is MEPGVRARSGAPQPASPVLWRARPAGGGGASSWLLLDGNSWLLCYGFLYLALYAQVSQSKPCERTGSCFSGRCVNSTCLCDPGWVGDQCQHCQGRFKLTEPSGYLTDGPINYKYKTKCTWLIEGYPNAVLRLRFNHFATECSWDHMYVYDGDSIYAPLVAVLSGLIVPEVRGNETVPEVVTTSGYALLHFFSDAAYNLTGFNIFYSINSCPNNCSGHGKCTTSVSVASQVYCECDKYWKGEACDIPYCKANCGSPDHGYCDLTGEKLCVCNDSWQGPDCSLNVPSTESYWILPNVKPFSPSVGRASHKAVLHGKFMWVIGGYTFNYSSFQMVLNYNLESSIWNVGAVSRGPLQRYGHSLALYQENIFMYGGRMETSDGNVTDELWVFNVRSQSWSTKTPTVLGHSQQYAVEGHSAHIMELDSRDVVMIVIFGYSAIYGYTSSIQEYHISSNTWLVPETKGAIVQGGYGHTSVYDEVTKSIYVHGGYKALPGNKYGLVDDLYKYEVNTRTWTILKESGFARYLHSAVLINGAMLIFGGNTHNDTSLSNGAKCFSADFLAYDIACDEWKTLPKPNLHRDVNRFGHSAVVINGSMYIFGGFSSVLLNDILVYKPPNCKAFRDEELCRNAGPGIKCVWNKNHCESWESGNTNNILRAKCPPKTAATDDRCYRYADCASCTANTNGCQWCDDKKCISASSNCSTSVRNYTKCHIRNEQICNKLTSCKSCSLNLNCQWDQRQQECQALPAHLCGEGWNHVGDACLRINSSRESYDNAKLYCYNLSGNLASLTTSKEVEFVLDEIQKFTQQKVSPWVGLRKINISYWGWEDMSPFTNTSLQWLPGEPNDSGFCAYLERAAVAGLKANPCTSMADGLVCEKPVVSPNQNARPCKKPCSLRTSCANCTSSGMECMWCSSTKRCVDSNAYIISFPYGQCLEWQTATCSPQNCSGLRTCGQCLEQPGCGWCNDPSNTGRGYCIEGSSRGPMKLAGVHNSDVVLDTSLCPKEKNYEWSFIQCPACQCNGHSTCINNNVCEQCKNLTTGRQCQECMPGYYGDPTNGGQCTACTCGGHANVCHLHTGKCFCTTKGIKGDQCQLCDSENRYVGNPLRGTCYYSLLIDYQFTFSLLQEDDRHHTAINFIANPEQSNKNLDISINASNNFNLNITWSVGSTGGTISGEETPIVSKTNIKEYRDSFSYEKFNFRSNPNITFYVYVSNFSWPIKIQIAFSQHNTIMDLVQFFVTFFSCFLSLLLVAAVVWKIKQTCWASRRREQLLRERQQMASRPFASVDVALEVGAEQTDFLRGPLEGAPKPIAIEPCAGNRAAVLTVFLCLPRGSSGAPPPGQSGLAIASALIDISQQKPSDNKDKTSGVRNRKHLSTRQGTCV.

The first 51 residues, 1 to 51, serve as a signal peptide directing secretion; that stretch reads MEPGVRARSGAPQPASPVLWRARPAGGGGASSWLLLDGNSWLLCYGFLYLA. An EGF-like 1 domain is found at 52-90; sequence LYAQVSQSKPCERTGSCFSGRCVNSTCLCDPGWVGDQCQ. Residues 52–1229 lie on the Extracellular side of the membrane; the sequence is LYAQVSQSKP…FSQHNTIMDL (1178 aa). 3 disulfides stabilise this stretch: Cys62/Cys78, Cys80/Cys89, and Cys92/Cys118. Residue Asn75 is glycosylated (N-linked (GlcNAc...) asparagine). The 117-residue stretch at 92 to 208 folds into the CUB domain; the sequence is CQGRFKLTEP…TGFNIFYSIN (117 aa). N-linked (GlcNAc...) asparagine glycans are attached at residues Asn173 and Asn197. In terms of domain architecture, EGF-like 2 spans 206–244; the sequence is SINSCPNNCSGHGKCTTSVSVASQVYCECDKYWKGEACD. Disulfide bonds link Cys210-Cys220, Cys214-Cys232, and Cys234-Cys243. Kelch repeat units follow at residues 315 to 364, 366 to 414, 426 to 474, 479 to 530, 532 to 590, and 591 to 637; these read FMWV…LYQE, IFMY…EGHS, VMIV…SVYD, SIYV…LING, MLIF…VING, and SMYI…WNKN. N-linked (GlcNAc...) asparagine glycosylation occurs at Asn379. PSI domains lie at 613–656, 665–708, and 714–759; these read NCKA…AKCP, RCYR…TKCH, and ICNK…DACL. The N-linked (GlcNAc...) asparagine glycan is linked to Asn703. Positions 754 to 872 constitute a C-type lectin domain; that stretch reads VGDACLRINS…TSMADGLVCE (119 aa). A disulfide bond links Cys775 and Cys871. N-linked (GlcNAc...) asparagine glycans are attached at residues Asn777 and Asn897. 2 consecutive PSI domains span residues 888–938 and 941–1011; these read PCSL…ATCS and NCSG…IQCP. Cystine bridges form between Cys1013-Cys1021, Cys1015-Cys1027, Cys1030-Cys1039, Cys1042-Cys1056, Cys1059-Cys1068, Cys1061-Cys1075, Cys1077-Cys1087, and Cys1090-Cys1105. 2 Laminin EGF-like domains span residues 1013–1058 and 1059–1107; these read CQCN…QCTA and CTCG…TCYY. N-linked (GlcNAc...) asparagine glycosylation is present at Asn1156. The chain crosses the membrane as a helical span at residues 1230-1250; the sequence is VQFFVTFFSCFLSLLLVAAVV. The Cytoplasmic portion of the chain corresponds to 1251–1378; that stretch reads WKIKQTCWAS…HLSTRQGTCV (128 aa). The interval 1287–1324 is interaction with MC4R; sequence VGAEQTDFLRGPLEGAPKPIAIEPCAGNRAAVLTVFLC. Residues 1351 to 1378 are disordered; sequence QQKPSDNKDKTSGVRNRKHLSTRQGTCV.

Interacts with MC4R. As to expression, highly expressed in brain, heart, lung, kidney and liver. In the central nervous system, it is highly expressed in the dentate gyrus, CA1-3 regions of the hippocampus, and the ventral taenia tecta.

It localises to the cell membrane. May play a role in melanocortin signaling pathways that regulate energy homeostasis. This is Attractin-like protein 1 (Atrnl1) from Mus musculus (Mouse).